The primary structure comprises 203 residues: E3 ubiquitin-protein ligase RNF152 (203 aa).

The RING-type zinc finger occupies 12 to 55 (CQICFNYYSPRRRPKLLDCKHTCCSVCLQQMRTSQKDLRCPWCR). Residues 167–187 (SGVCTVILVACVLVFLLGIVL) traverse the membrane as a helical segment.

The protein belongs to the RNF152 family.

The protein resides in the lysosome membrane. The catalysed reaction is S-ubiquitinyl-[E2 ubiquitin-conjugating enzyme]-L-cysteine + [acceptor protein]-L-lysine = [E2 ubiquitin-conjugating enzyme]-L-cysteine + N(6)-ubiquitinyl-[acceptor protein]-L-lysine.. It participates in protein modification; protein ubiquitination. Its function is as follows. E3 ubiquitin-protein ligase that acts as a negative regulator of mTORC1 signaling by mediating ubiquitination of RagA/RRAGA and RHEB. Catalyzes 'Lys-63'-linked polyubiquitination of RagA/RRAGA in response to amino acid starvation, thereby regulating mTORC1 signaling. Also mediates monoubiquitination of RHEB, promoting its association with the TSC-TBC complex and subsequent inhibition. Also mediates 'Lys-48'-linked polyubiquitination of target proteins and their subsequent targeting to the proteasome for degradation. The protein is E3 ubiquitin-protein ligase RNF152 of Gallus gallus (Chicken).